The following is a 792-amino-acid chain: Carboxysome assembly protein CsoS2 (792 aa).

Basic and acidic residues predominate over residues 1–15 (MAKQSSRELALERRK). Positions 1–235 (MAKQSSRELA…EISQRVRELR (235 aa)) are N-terminal domain. Disordered stretches follow at residues 1 to 259 (MAKQ…RNGS), 280 to 299 (QVVT…NEAS), and 338 to 359 (HGNR…DEPG). An N-repeat 1 repeat occupies 7–22 (RELALERRKALSNSGK). Composition is skewed to polar residues over residues 17–36 (LSNS…NRIR) and 69–82 (DTSF…SGAS). The N-repeat 2 repeat unit spans residues 94 to 109 (RELVLARRDELSRRGQ). 2 stretches are compositionally biased toward basic and acidic residues: residues 97–106 (VLARRDELSR) and 113–126 (KSKD…EKIS). Residues 161–175 (DTVSRLSSRNSTSRP) show a composition bias toward polar residues. N-repeat repeat units follow at residues 187–202 (RALV…KHGK) and 225–240 (REIS…KSGA). Residues 218 to 236 (GDPDLSSREISQRVRELRS) are compositionally biased toward basic and acidic residues. The segment at 240–615 (ATGKKRSGAC…VQACGSDAPA (376 aa)) is middle region. M-repeat repeat units lie at residues 270 to 319 (KVGL…DTFC), 330 to 379 (KVAV…NQYC), 388 to 427 (KVGQ…GDQY), 441 to 490 (KVGS…NTFC), 500 to 549 (KVGL…SGWC), and 560 to 609 (RTPK…VQAC). Disordered regions lie at residues 608-662 (ACGS…GSQI) and 687-792 (HFKS…GARG). Residues 616–792 (GSNDHQGSSE…LITVSGGARG (177 aa)) form a C-terminal domain region. 2 stretches are compositionally biased toward polar residues: residues 618–636 (NDHQ…SVQS) and 651–662 (VTGTSYEQGSQI). C-repeat repeat units follow at residues 633 to 678 (SVQS…GTEQ) and 703 to 738 (TRPE…EGAS). The tract at residues 763 to 792 (EVSQPMSRVTGSSGNTDQGSLITVSGGARG) is C-terminal peptide (CTP). A compositionally biased stretch (polar residues) spans 764 to 785 (VSQPMSRVTGSSGNTDQGSLIT).

This sequence belongs to the CsoS2 family. Probably interacts with the carboxysome major shell protein CsoS1 via the N-terminal domain; this complex probably also interacts with RuBisCO. Post-translationally, has been suggested to undergo ribosomal frameshifting, as does its ortholog in H.neapolitanus. The exact position of the putative frameshift is not given, but it would probably occur in the sixth M-repeat and remove the C-terminus.

The protein localises to the carboxysome. In terms of biological role, required for alpha-carboxysome (Cb) assembly, mediates interaction between RuBisCO and the Cb shell. The protein is probably intrinsically disordered. The C-terminal repeats act as the encapsulation signal to target proteins to the Cb; they are necessary and sufficient to target both CsoS2 and foreign proteins to the Cb. The N-terminal repeats of this protein bind simultaneously to both subunits of RuBisCO. Probably also interacts with the major shell proteins (CsoS1); that interaction would increase the local concentration of CsoS2 so that it can condense RuBisCO and full carboxysomes can be formed. The protein is Carboxysome assembly protein CsoS2 of Prochlorococcus marinus (strain MIT 9313).